A 30-amino-acid chain; its full sequence is Kappa-sparatoxin-Hv1d (30 aa).

Disulfide bonds link C3–C17, C10–C22, and C16–C26.

In terms of tissue distribution, expressed by the venom gland.

Its subcellular location is the secreted. Inhibitor of voltage-gated potassium channels of the Kv4/KCND family. Blocks calcium channels (Cav). The chain is Kappa-sparatoxin-Hv1d from Heteropoda venatoria (Brown huntsman spider).